The following is a 300-amino-acid chain: Fe(3+) dicitrate-binding periplasmic protein FecB (300 aa).

The signal sequence occupies residues 1 to 21; the sequence is MLAFIRFLFAGLLLVISHAFA. A Fe/B12 periplasmic-binding domain is found at 39–295; that stretch reads RIVVLELSFA…DTVKIFHHQP (257 aa).

This sequence belongs to the bacterial solute-binding protein 8 family. The complex is composed of two ATP-binding proteins (FecE), two transmembrane proteins (FecC and FecD) and a solute-binding protein (FecB). Interacts with FecC and FecD.

The protein resides in the periplasm. In terms of biological role, part of the ABC transporter complex FecBCDE involved in citrate-dependent Fe(3+) uptake. Binds both iron-free and iron-loaded citrate although it binds iron-loaded citrate with a higher affinity. Binds different forms of Fe(3+)-citrate as well as citrate complexed with various representative Fe(3+)-mimics (Ga(3+), Al(3+), Sc(3+) and In(3+)) and a representative divalent metal ion (Mg(2+)). Can also bind various tricarboxylates in iron-free and iron-loaded form. The polypeptide is Fe(3+) dicitrate-binding periplasmic protein FecB (Escherichia coli (strain K12)).